Reading from the N-terminus, the 151-residue chain is Transcriptional repressor NrdR (151 aa).

A zinc finger spans residues 3 to 34; the sequence is CPFCNAQDTKVIDSRLVSEGSQVRRRRSCNEC. The region spanning 49-139 is the ATP-cone domain; it reads PRLIKSDGRR…VYRSFKDVKE (91 aa).

Belongs to the NrdR family. The cofactor is Zn(2+).

Negatively regulates transcription of bacterial ribonucleotide reductase nrd genes and operons by binding to NrdR-boxes. This chain is Transcriptional repressor NrdR, found in Psychromonas ingrahamii (strain DSM 17664 / CCUG 51855 / 37).